The sequence spans 217 residues: Probable GTP-binding protein EngB (217 aa).

The EngB-type G domain maps to 27–201; sequence TGIEVAFAGR…RDKLDTWFSE (175 aa). GTP is bound by residues 35–42, 62–66, 80–83, 147–150, and 180–182; these read GRSNAGKS, GRTQL, DLPG, TKAD, and FSS. 2 residues coordinate Mg(2+): S42 and T64.

This sequence belongs to the TRAFAC class TrmE-Era-EngA-EngB-Septin-like GTPase superfamily. EngB GTPase family. The cofactor is Mg(2+).

Necessary for normal cell division and for the maintenance of normal septation. This Edwardsiella ictaluri (strain 93-146) protein is Probable GTP-binding protein EngB.